A 537-amino-acid chain; its full sequence is Tegument protein BRRF2 (537 aa).

Disordered stretches follow at residues 325–474 (LALP…EAQD) and 486–537 (GLRV…LSVI). Polar residues predominate over residues 334–347 (KPQQTCSQLTSRGN). The segment covering 423 to 441 (SSQAAPSSSSVAPVASLSG) has biased composition (low complexity). Acidic residues predominate over residues 492–517 (DEDEDGSEDGEFSDLDLSDSDHEGDE).

This sequence belongs to the lymphocryptovirus BRRF2 family.

Its subcellular location is the virion tegument. This Homo sapiens (Human) protein is Tegument protein BRRF2.